The following is a 353-amino-acid chain: Holliday junction branch migration complex subunit RuvB (353 aa).

Residues 1 to 182 form a large ATPase domain (RuvB-L) region; it reads MPERLITPKG…FGIVQRLEFY (182 aa). Residues isoleucine 21, arginine 22, glycine 63, lysine 66, threonine 67, threonine 68, 129-131, arginine 172, tyrosine 182, and arginine 219 contribute to the ATP site; that span reads EDF. Threonine 67 is a Mg(2+) binding site. The interval 183-253 is small ATPAse domain (RuvB-S); that stretch reads NVQDLTRIVQ…VADRALDLLD (71 aa). Residues 256–353 form a head domain (RuvB-H) region; that stretch reads VQGFDAQDRR…QEEGGGEGKL (98 aa). DNA is bound by residues arginine 292, arginine 311, and arginine 316.

Belongs to the RuvB family. As to quaternary structure, homohexamer. Forms an RuvA(8)-RuvB(12)-Holliday junction (HJ) complex. HJ DNA is sandwiched between 2 RuvA tetramers; dsDNA enters through RuvA and exits via RuvB. An RuvB hexamer assembles on each DNA strand where it exits the tetramer. Each RuvB hexamer is contacted by two RuvA subunits (via domain III) on 2 adjacent RuvB subunits; this complex drives branch migration. In the full resolvosome a probable DNA-RuvA(4)-RuvB(12)-RuvC(2) complex forms which resolves the HJ.

Its subcellular location is the cytoplasm. It carries out the reaction ATP + H2O = ADP + phosphate + H(+). In terms of biological role, the RuvA-RuvB-RuvC complex processes Holliday junction (HJ) DNA during genetic recombination and DNA repair, while the RuvA-RuvB complex plays an important role in the rescue of blocked DNA replication forks via replication fork reversal (RFR). RuvA specifically binds to HJ cruciform DNA, conferring on it an open structure. The RuvB hexamer acts as an ATP-dependent pump, pulling dsDNA into and through the RuvAB complex. RuvB forms 2 homohexamers on either side of HJ DNA bound by 1 or 2 RuvA tetramers; 4 subunits per hexamer contact DNA at a time. Coordinated motions by a converter formed by DNA-disengaged RuvB subunits stimulates ATP hydrolysis and nucleotide exchange. Immobilization of the converter enables RuvB to convert the ATP-contained energy into a lever motion, pulling 2 nucleotides of DNA out of the RuvA tetramer per ATP hydrolyzed, thus driving DNA branch migration. The RuvB motors rotate together with the DNA substrate, which together with the progressing nucleotide cycle form the mechanistic basis for DNA recombination by continuous HJ branch migration. Branch migration allows RuvC to scan DNA until it finds its consensus sequence, where it cleaves and resolves cruciform DNA. In Thioalkalivibrio sulfidiphilus (strain HL-EbGR7), this protein is Holliday junction branch migration complex subunit RuvB.